We begin with the raw amino-acid sequence, 316 residues long: Transaldolase (316 aa).

Catalysis depends on lysine 127, which acts as the Schiff-base intermediate with substrate.

It belongs to the transaldolase family. Type 2 subfamily.

The protein resides in the cytoplasm. It catalyses the reaction D-sedoheptulose 7-phosphate + D-glyceraldehyde 3-phosphate = D-erythrose 4-phosphate + beta-D-fructose 6-phosphate. Its pathway is carbohydrate degradation; pentose phosphate pathway; D-glyceraldehyde 3-phosphate and beta-D-fructose 6-phosphate from D-ribose 5-phosphate and D-xylulose 5-phosphate (non-oxidative stage): step 2/3. In terms of biological role, transaldolase is important for the balance of metabolites in the pentose-phosphate pathway. In Helicobacter pylori (strain Shi470), this protein is Transaldolase.